Reading from the N-terminus, the 341-residue chain is Biotin synthase (341 aa).

Positions 40 to 267 (AEIQVSTLLS…RSMVRLSAGR (228 aa)) constitute a Radical SAM core domain. 3 residues coordinate [4Fe-4S] cluster: Cys-55, Cys-59, and Cys-62. Positions 99, 130, 190, and 262 each coordinate [2Fe-2S] cluster.

It belongs to the radical SAM superfamily. Biotin synthase family. Homodimer. Requires [4Fe-4S] cluster as cofactor. [2Fe-2S] cluster is required as a cofactor.

It catalyses the reaction (4R,5S)-dethiobiotin + (sulfur carrier)-SH + 2 reduced [2Fe-2S]-[ferredoxin] + 2 S-adenosyl-L-methionine = (sulfur carrier)-H + biotin + 2 5'-deoxyadenosine + 2 L-methionine + 2 oxidized [2Fe-2S]-[ferredoxin]. Its pathway is cofactor biosynthesis; biotin biosynthesis; biotin from 7,8-diaminononanoate: step 2/2. Functionally, catalyzes the conversion of dethiobiotin (DTB) to biotin by the insertion of a sulfur atom into dethiobiotin via a radical-based mechanism. The chain is Biotin synthase from Xylella fastidiosa (strain 9a5c).